Here is a 228-residue protein sequence, read N- to C-terminus: 5'-methylthioadenosine/S-adenosylhomocysteine nucleosidase (228 aa).

Glu11 functions as the Proton acceptor in the catalytic mechanism. Residues Gly77, Ile151, and 172 to 173 (ME) contribute to the substrate site. The Proton donor role is filled by Asp196.

Belongs to the PNP/UDP phosphorylase family. MtnN subfamily.

The enzyme catalyses S-adenosyl-L-homocysteine + H2O = S-(5-deoxy-D-ribos-5-yl)-L-homocysteine + adenine. It carries out the reaction S-methyl-5'-thioadenosine + H2O = 5-(methylsulfanyl)-D-ribose + adenine. The catalysed reaction is 5'-deoxyadenosine + H2O = 5-deoxy-D-ribose + adenine. The protein operates within amino-acid biosynthesis; L-methionine biosynthesis via salvage pathway; S-methyl-5-thio-alpha-D-ribose 1-phosphate from S-methyl-5'-thioadenosine (hydrolase route): step 1/2. Its function is as follows. Catalyzes the irreversible cleavage of the glycosidic bond in both 5'-methylthioadenosine (MTA) and S-adenosylhomocysteine (SAH/AdoHcy) to adenine and the corresponding thioribose, 5'-methylthioribose and S-ribosylhomocysteine, respectively. Also cleaves 5'-deoxyadenosine, a toxic by-product of radical S-adenosylmethionine (SAM) enzymes, into 5-deoxyribose and adenine. This Staphylococcus aureus (strain MRSA252) protein is 5'-methylthioadenosine/S-adenosylhomocysteine nucleosidase.